A 401-amino-acid polypeptide reads, in one-letter code: MAAATVTVEEVRKAQRATGPATVLAIGTATPANCVHQADYPDYYFRITKSEHMTDLKEKFKRMCDKSQIRKRYMHLTEEYLAENPNMCAYMAPSLDARQDIVVVEVPKLGKAAAQKAIKEWGQPKSKITHLVFCTTSGVDMPGADYQLTKMLGLRPSVNRLMMYQQGCFAGGTVLRVAKDLAENNRGARVLVVCSEITAVTFRGPSESHLDSMVGQALFGDGAAAVIVGADPDERVERPLFQLVSASQTILPDSEGAIDGHLREVGLTFHLLKDVPGLISKNIERSLEEAFKPLGITDYNSIFWVAHPGGPAILDQVEAKVGLEKERLRATRHVLSEYGNMSSACVLFILDEMRKRSAEDGQATTGEGFDWGVLFGFGPGLTVETVVLHSVPITTGAAITA.

Residue C168 is part of the active site.

The protein belongs to the thiolase-like superfamily. Chalcone/stilbene synthases family.

It catalyses the reaction (E)-4-coumaroyl-CoA + 3 malonyl-CoA + 3 H(+) = 2',4,4',6'-tetrahydroxychalcone + 3 CO2 + 4 CoA. Its pathway is secondary metabolite biosynthesis; flavonoid biosynthesis. Its function is as follows. The primary product of this enzyme is 4,2',4',6'-tetrahydroxychalcone (also termed naringenin-chalcone or chalcone) which can under specific conditions spontaneously isomerize into naringenin. The polypeptide is Chalcone synthase 3 (CHS3) (Sorghum bicolor (Sorghum)).